The following is a 651-amino-acid chain: J domain-containing protein required for chloroplast accumulation response 1 (651 aa).

A compositionally biased stretch (polar residues) spans 1 to 17 (MQTLPSSETVLLGSNSA). 5 disordered regions span residues 1–56 (MQTL…TRHS), 114–138 (GSRI…QFSL), 156–176 (LNKN…SKAD), 250–291 (KLGK…TDLK), and 308–526 (KPLD…IDEP). At serine 56 the chain carries Phosphoserine. Low complexity predominate over residues 126 to 137 (SSSGTSSPSQFS). 6 stretches are compositionally biased toward basic and acidic residues: residues 250–259 (KLGKNEEGDG), 281–291 (TKEEKTETDLK), 337–357 (IFHE…EVRK), 405–416 (VGKDGVKGKVSD), 441–456 (RAKE…DGSN), and 488–497 (QKKDSDRESM). Residues 532 to 562 (DVEDITQDENKMEEANKDAEEIKNIDAKIRK) are a coiled coil. The 66-residue stretch at 586 to 651 (SGWKPVPLMD…WDHFNTLGPV (66 aa)) folds into the J domain.

As to expression, expressed in leaves and stems, but not in roots.

It is found in the cytoplasm. In terms of biological role, required for chloroplast photorelocation movement; chloroplast accumulation upon low blue light and for chloroplast movement to the bottom of cells in darkness, by modulating chloroplast actin (Cp-actin) filaments distribution, appearance and disappearance. May mediate a slight resistance to aluminum in root hair cells. In Arabidopsis thaliana (Mouse-ear cress), this protein is J domain-containing protein required for chloroplast accumulation response 1 (JAC1).